The following is a 217-amino-acid chain: Protein-methionine-sulfoxide reductase heme-binding subunit MsrQ (217 aa).

The next 4 membrane-spanning stretches (helical) occupy residues 82 to 102 (MLGL…LLVD), 118 to 138 (PFIT…ATST), 150 to 170 (WQWL…HYWW), and 180 to 200 (EVSI…WWVW).

Belongs to the MsrQ family. Heterodimer of a catalytic subunit (MsrP) and a heme-binding subunit (MsrQ). FMN is required as a cofactor. Heme b serves as cofactor.

The protein localises to the cell inner membrane. In terms of biological role, part of the MsrPQ system that repairs oxidized periplasmic proteins containing methionine sulfoxide residues (Met-O), using respiratory chain electrons. Thus protects these proteins from oxidative-stress damage caused by reactive species of oxygen and chlorine generated by the host defense mechanisms. MsrPQ is essential for the maintenance of envelope integrity under bleach stress, rescuing a wide series of structurally unrelated periplasmic proteins from methionine oxidation. MsrQ provides electrons for reduction to the reductase catalytic subunit MsrP, using the quinone pool of the respiratory chain. The protein is Protein-methionine-sulfoxide reductase heme-binding subunit MsrQ of Ralstonia nicotianae (strain ATCC BAA-1114 / GMI1000) (Ralstonia solanacearum).